The sequence spans 122 residues: Protein FAM223B (122 aa).

This sequence belongs to the FAM223 family.

In Homo sapiens (Human), this protein is Protein FAM223B (FAM223B).